The sequence spans 289 residues: Phosphatidylglycerol--prolipoprotein diacylglyceryl transferase (289 aa).

The next 3 helical transmembrane spans lie at Leu13 to Trp33, Phe61 to Tyr81, and Gly99 to Met119. Arg144 lines the a 1,2-diacyl-sn-glycero-3-phospho-(1'-sn-glycerol) pocket. 2 consecutive transmembrane segments (helical) span residues Gly218–Val238 and Leu250–Ile270.

This sequence belongs to the Lgt family.

It is found in the cell inner membrane. It carries out the reaction L-cysteinyl-[prolipoprotein] + a 1,2-diacyl-sn-glycero-3-phospho-(1'-sn-glycerol) = an S-1,2-diacyl-sn-glyceryl-L-cysteinyl-[prolipoprotein] + sn-glycerol 1-phosphate + H(+). It participates in protein modification; lipoprotein biosynthesis (diacylglyceryl transfer). Functionally, catalyzes the transfer of the diacylglyceryl group from phosphatidylglycerol to the sulfhydryl group of the N-terminal cysteine of a prolipoprotein, the first step in the formation of mature lipoproteins. In Phenylobacterium zucineum (strain HLK1), this protein is Phosphatidylglycerol--prolipoprotein diacylglyceryl transferase.